Consider the following 149-residue polypeptide: SsrA-binding protein (149 aa).

The protein belongs to the SmpB family.

Its subcellular location is the cytoplasm. Required for rescue of stalled ribosomes mediated by trans-translation. Binds to transfer-messenger RNA (tmRNA), required for stable association of tmRNA with ribosomes. tmRNA and SmpB together mimic tRNA shape, replacing the anticodon stem-loop with SmpB. tmRNA is encoded by the ssrA gene; the 2 termini fold to resemble tRNA(Ala) and it encodes a 'tag peptide', a short internal open reading frame. During trans-translation Ala-aminoacylated tmRNA acts like a tRNA, entering the A-site of stalled ribosomes, displacing the stalled mRNA. The ribosome then switches to translate the ORF on the tmRNA; the nascent peptide is terminated with the 'tag peptide' encoded by the tmRNA and targeted for degradation. The ribosome is freed to recommence translation, which seems to be the essential function of trans-translation. In Anaplasma phagocytophilum (strain HZ), this protein is SsrA-binding protein.